Here is a 469-residue protein sequence, read N- to C-terminus: Crinkler effector protein 1 (469 aa).

Positions 1-17 are cleaved as a signal peptide; that stretch reads MSITLLCLIKGNTLANA. The tract at residues 18-57 is LQLFLAK-like domain; the sequence is FPVDIDKDQLVGHLKKVIKAEQPQTFANVDAKDLKLWRVP. Residues 58 to 96 are DWL domain; sequence ISDDHDDQLRNLSLEDSDELLAIRKISKYFPDSPPEECI. A glycan (N-linked (GlcNAc...) asparagine) is linked at Asn-68. Residues 97–103 carry the HVLVXXP motif motif; it reads HVLVEPP. Asn-126, Asn-181, and Asn-248 each carry an N-linked (GlcNAc...) asparagine glycan.

Belongs to the Crinkler effector family. In terms of assembly, homodimer.

Its subcellular location is the secreted. The protein resides in the host nucleus. In terms of biological role, effector that participates in the arbuscule development step of the symbiosis. Arbuscular mycorrhizal (AM) symbiosis is one of the most prominent and beneficial plant-microbe interactions that facilitates mineral nutrition and confers tolerance to biotic and abiotic stresses. Is not involved in cell death processes. This chain is Crinkler effector protein 1, found in Rhizophagus irregularis (strain DAOM 181602 / DAOM 197198 / MUCL 43194) (Arbuscular mycorrhizal fungus).